The sequence spans 206 residues: MLSNLMSWHITLPIALAAAVIGYLFGSIPFGLILTRAAGLGDVRSIGSGNIGATNVLRTGNRKLAAATLLLDALKASAAAWIVGYFLGEEAAIIAGFFAFIGHLFPVWIGFKGGKGVATYIGTLLGVAPIMVVLFAAVWLAVAFTTRYSSLSALVAMLVIPVALLILGNEKVAAVMAIMTVISYWKHKANISRLMGGTETKIGAKG.

A run of 5 helical transmembrane segments spans residues 14–34, 67–87, 91–111, 124–144, and 148–168; these read IALA…GLIL, ATLL…GYFL, AAII…WIGF, LLGV…AVAF, and YSSL…LILG.

Belongs to the PlsY family. In terms of assembly, probably interacts with PlsX.

Its subcellular location is the cell inner membrane. It carries out the reaction an acyl phosphate + sn-glycerol 3-phosphate = a 1-acyl-sn-glycero-3-phosphate + phosphate. Its pathway is lipid metabolism; phospholipid metabolism. Catalyzes the transfer of an acyl group from acyl-phosphate (acyl-PO(4)) to glycerol-3-phosphate (G3P) to form lysophosphatidic acid (LPA). This enzyme utilizes acyl-phosphate as fatty acyl donor, but not acyl-CoA or acyl-ACP. This is Glycerol-3-phosphate acyltransferase from Rhizobium etli (strain CIAT 652).